Here is a 427-residue protein sequence, read N- to C-terminus: Serine--tRNA ligase (427 aa).

Residue 232-234 (TAE) coordinates L-serine. Residue 263–265 (RSE) coordinates ATP. Glutamate 286 contacts L-serine. 350–353 (EISS) is an ATP binding site. Serine 385 lines the L-serine pocket.

It belongs to the class-II aminoacyl-tRNA synthetase family. Type-1 seryl-tRNA synthetase subfamily. In terms of assembly, homodimer. The tRNA molecule binds across the dimer.

The protein resides in the cytoplasm. It carries out the reaction tRNA(Ser) + L-serine + ATP = L-seryl-tRNA(Ser) + AMP + diphosphate + H(+). The catalysed reaction is tRNA(Sec) + L-serine + ATP = L-seryl-tRNA(Sec) + AMP + diphosphate + H(+). It functions in the pathway aminoacyl-tRNA biosynthesis; selenocysteinyl-tRNA(Sec) biosynthesis; L-seryl-tRNA(Sec) from L-serine and tRNA(Sec): step 1/1. In terms of biological role, catalyzes the attachment of serine to tRNA(Ser). Is also able to aminoacylate tRNA(Sec) with serine, to form the misacylated tRNA L-seryl-tRNA(Sec), which will be further converted into selenocysteinyl-tRNA(Sec). In Aromatoleum aromaticum (strain DSM 19018 / LMG 30748 / EbN1) (Azoarcus sp. (strain EbN1)), this protein is Serine--tRNA ligase.